The sequence spans 355 residues: Natterin-1 (355 aa).

The signal sequence occupies residues 1–18 (MIPSVLLVTLLLLSWTSA). The propeptide occupies 19–27 (EKDLKVRVA).

This sequence belongs to the natterin family. Contains 4 disulfide bonds. As to expression, expressed by the venom gland.

It is found in the secreted. With respect to regulation, inhibited by tissue-kallikrein inhibitor TKI and trasylol. Plasma kallikrein inhibitor PKSI527 and classical inhibitors of serine-, metallo-, thiol- or aspartate-peptidases evokes a minor inhibition of the peptide digestion. In terms of biological role, shows nociceptive, edema-inducing and kininogenase activity with release of kallidin from low molecular weight kininogen. The cleavage occurs at Met-Lys bonds. The protein is Natterin-1 of Thalassophryne nattereri (Copper Joe toadfish).